Here is a 128-residue protein sequence, read N- to C-terminus: Small ribosomal subunit protein bS6 (128 aa).

This sequence belongs to the bacterial ribosomal protein bS6 family.

Functionally, binds together with bS18 to 16S ribosomal RNA. The protein is Small ribosomal subunit protein bS6 of Leifsonia xyli subsp. xyli (strain CTCB07).